A 338-amino-acid polypeptide reads, in one-letter code: Ketol-acid reductoisomerase (NADP(+)) (338 aa).

The 181-residue stretch at 1 to 181 (MKVFYDKDAD…GGGRAGIIET (181 aa)) folds into the KARI N-terminal Rossmann domain. NADP(+)-binding positions include 24 to 27 (YGSQ), arginine 47, and serine 52. Residue histidine 107 is part of the active site. NADP(+) is bound at residue glycine 133. Positions 182-327 (NFREETETDL…SKLRAMMPWI (146 aa)) constitute a KARI C-terminal knotted domain. Aspartate 190, glutamate 194, glutamate 226, and glutamate 230 together coordinate Mg(2+). Serine 251 provides a ligand contact to substrate.

It belongs to the ketol-acid reductoisomerase family. Mg(2+) serves as cofactor.

The enzyme catalyses (2R)-2,3-dihydroxy-3-methylbutanoate + NADP(+) = (2S)-2-acetolactate + NADPH + H(+). It carries out the reaction (2R,3R)-2,3-dihydroxy-3-methylpentanoate + NADP(+) = (S)-2-ethyl-2-hydroxy-3-oxobutanoate + NADPH + H(+). Its pathway is amino-acid biosynthesis; L-isoleucine biosynthesis; L-isoleucine from 2-oxobutanoate: step 2/4. It participates in amino-acid biosynthesis; L-valine biosynthesis; L-valine from pyruvate: step 2/4. In terms of biological role, involved in the biosynthesis of branched-chain amino acids (BCAA). Catalyzes an alkyl-migration followed by a ketol-acid reduction of (S)-2-acetolactate (S2AL) to yield (R)-2,3-dihydroxy-isovalerate. In the isomerase reaction, S2AL is rearranged via a Mg-dependent methyl migration to produce 3-hydroxy-3-methyl-2-ketobutyrate (HMKB). In the reductase reaction, this 2-ketoacid undergoes a metal-dependent reduction by NADPH to yield (R)-2,3-dihydroxy-isovalerate. This is Ketol-acid reductoisomerase (NADP(+)) from Burkholderia thailandensis (strain ATCC 700388 / DSM 13276 / CCUG 48851 / CIP 106301 / E264).